We begin with the raw amino-acid sequence, 344 residues long: Holliday junction branch migration complex subunit RuvB (344 aa).

Positions 1 to 182 (MRIELLNTPP…FGINSRFDYY (182 aa)) are large ATPase domain (RuvB-L). Residues Ile21, Arg22, Gly63, Lys66, Thr67, Thr68, 129–131 (EDF), Arg172, Tyr182, and Arg219 each bind ATP. Mg(2+) is bound at residue Thr67. Positions 183–253 (APELLEGIIR…IAMKTLDCLE (71 aa)) are small ATPAse domain (RuvB-S). The tract at residues 256-344 (EEGLDDMDKK…ISLFDAQPTS (89 aa)) is head domain (RuvB-H). 2 residues coordinate DNA: Arg311 and Arg316.

Belongs to the RuvB family. As to quaternary structure, homohexamer. Forms an RuvA(8)-RuvB(12)-Holliday junction (HJ) complex. HJ DNA is sandwiched between 2 RuvA tetramers; dsDNA enters through RuvA and exits via RuvB. An RuvB hexamer assembles on each DNA strand where it exits the tetramer. Each RuvB hexamer is contacted by two RuvA subunits (via domain III) on 2 adjacent RuvB subunits; this complex drives branch migration. In the full resolvosome a probable DNA-RuvA(4)-RuvB(12)-RuvC(2) complex forms which resolves the HJ.

It is found in the cytoplasm. It catalyses the reaction ATP + H2O = ADP + phosphate + H(+). The RuvA-RuvB-RuvC complex processes Holliday junction (HJ) DNA during genetic recombination and DNA repair, while the RuvA-RuvB complex plays an important role in the rescue of blocked DNA replication forks via replication fork reversal (RFR). RuvA specifically binds to HJ cruciform DNA, conferring on it an open structure. The RuvB hexamer acts as an ATP-dependent pump, pulling dsDNA into and through the RuvAB complex. RuvB forms 2 homohexamers on either side of HJ DNA bound by 1 or 2 RuvA tetramers; 4 subunits per hexamer contact DNA at a time. Coordinated motions by a converter formed by DNA-disengaged RuvB subunits stimulates ATP hydrolysis and nucleotide exchange. Immobilization of the converter enables RuvB to convert the ATP-contained energy into a lever motion, pulling 2 nucleotides of DNA out of the RuvA tetramer per ATP hydrolyzed, thus driving DNA branch migration. The RuvB motors rotate together with the DNA substrate, which together with the progressing nucleotide cycle form the mechanistic basis for DNA recombination by continuous HJ branch migration. Branch migration allows RuvC to scan DNA until it finds its consensus sequence, where it cleaves and resolves cruciform DNA. This chain is Holliday junction branch migration complex subunit RuvB, found in Pelodictyon phaeoclathratiforme (strain DSM 5477 / BU-1).